The primary structure comprises 298 residues: Bifunctional protein FolD (298 aa).

Residues 165–167, Ser190, and Ile231 contribute to the NADP(+) site; that span reads GRS.

This sequence belongs to the tetrahydrofolate dehydrogenase/cyclohydrolase family. As to quaternary structure, homodimer.

It catalyses the reaction (6R)-5,10-methylene-5,6,7,8-tetrahydrofolate + NADP(+) = (6R)-5,10-methenyltetrahydrofolate + NADPH. The catalysed reaction is (6R)-5,10-methenyltetrahydrofolate + H2O = (6R)-10-formyltetrahydrofolate + H(+). The protein operates within one-carbon metabolism; tetrahydrofolate interconversion. In terms of biological role, catalyzes the oxidation of 5,10-methylenetetrahydrofolate to 5,10-methenyltetrahydrofolate and then the hydrolysis of 5,10-methenyltetrahydrofolate to 10-formyltetrahydrofolate. This chain is Bifunctional protein FolD, found in Prochlorococcus marinus subsp. pastoris (strain CCMP1986 / NIES-2087 / MED4).